We begin with the raw amino-acid sequence, 198 residues long: RNA 2',3'-cyclic phosphodiesterase (198 aa).

Residue H39 is the Proton donor of the active site. 2 short sequence motifs (HXTX) span residues 39–42 and 130–133; these read HLTL and HITL. The active-site Proton acceptor is H130.

It belongs to the 2H phosphoesterase superfamily. ThpR family.

The enzyme catalyses a 3'-end 2',3'-cyclophospho-ribonucleotide-RNA + H2O = a 3'-end 2'-phospho-ribonucleotide-RNA + H(+). Hydrolyzes RNA 2',3'-cyclic phosphodiester to an RNA 2'-phosphomonoester. The polypeptide is RNA 2',3'-cyclic phosphodiesterase (Thermus thermophilus (strain ATCC 27634 / DSM 579 / HB8)).